The chain runs to 396 residues: Ribosomal RNA small subunit methyltransferase H (396 aa).

S-adenosyl-L-methionine-binding positions include 101–103 (GGH), aspartate 120, tyrosine 147, aspartate 171, and glutamine 178.

Belongs to the methyltransferase superfamily. RsmH family.

It is found in the cytoplasm. It carries out the reaction cytidine(1402) in 16S rRNA + S-adenosyl-L-methionine = N(4)-methylcytidine(1402) in 16S rRNA + S-adenosyl-L-homocysteine + H(+). In terms of biological role, specifically methylates the N4 position of cytidine in position 1402 (C1402) of 16S rRNA. The sequence is that of Ribosomal RNA small subunit methyltransferase H from Mycobacterium bovis (strain ATCC BAA-935 / AF2122/97).